A 197-amino-acid chain; its full sequence is 3-isopropylmalate dehydratase small subunit (197 aa).

This sequence belongs to the LeuD family. LeuD type 1 subfamily. In terms of assembly, heterodimer of LeuC and LeuD.

It carries out the reaction (2R,3S)-3-isopropylmalate = (2S)-2-isopropylmalate. It participates in amino-acid biosynthesis; L-leucine biosynthesis; L-leucine from 3-methyl-2-oxobutanoate: step 2/4. In terms of biological role, catalyzes the isomerization between 2-isopropylmalate and 3-isopropylmalate, via the formation of 2-isopropylmaleate. The chain is 3-isopropylmalate dehydratase small subunit from Mycolicibacterium vanbaalenii (strain DSM 7251 / JCM 13017 / BCRC 16820 / KCTC 9966 / NRRL B-24157 / PYR-1) (Mycobacterium vanbaalenii).